Reading from the N-terminus, the 346-residue chain is Transposase for insertion sequence element IS1533 (346 aa).

The protein belongs to the transposase IS1111A/IS1328/IS1533 family.

Its function is as follows. Required for the transposition of the insertion element. The protein is Transposase for insertion sequence element IS1533 (tnhA) of Leptospira borgpetersenii.